We begin with the raw amino-acid sequence, 195 residues long: uncharacterized protein (195 aa).

2 disordered regions span residues 1 to 54 and 173 to 195; these read MPKG…SNKI and LAGA…KPIS. Positions 7–20 are enriched in basic and acidic residues; that stretch reads KPNEKKEELEKFAK. The span at 45 to 54 shows a compositional bias: polar residues; the sequence is QNDSSSSNKI. Residues 48–97 are a coiled coil; sequence SSSSNKIVLSQAEKDLLRTELDKTEEEISTLKQVLSARQKHAAELKRKLG.

This sequence belongs to the TPD52 family.

This is an uncharacterized protein from Caenorhabditis elegans.